Here is a 277-residue protein sequence, read N- to C-terminus: Putative thiosulfate sulfurtransferase mpst-4 (277 aa).

Rhodanese domains lie at 15–153 (NFGN…VVQS) and 155–243 (SKAE…QHLN). Cysteine 204 functions as the Cysteine persulfide intermediate in the catalytic mechanism.

The catalysed reaction is thiosulfate + hydrogen cyanide = thiocyanate + sulfite + 2 H(+). The chain is Putative thiosulfate sulfurtransferase mpst-4 from Caenorhabditis elegans.